The sequence spans 591 residues: MLILNGFSSATLALITPPFLPKGGKALSQSGPDGLASITLPLPISAERGFAPALALHYSSGGGNGPFGVGWSCATMSIARRTSHGVPQYNDSDEFLGPDGEVLVQTLSTGDAPNPVTCFAYGDVSFPQSYTVTRYQPRTESSFYRLEYWVGNSNGDDFWLLHDSNGILHLLGKTAAARLSDPQAASHTAQWLVEESVTPAGEHIYYSYLAENGDNVDLNGNEAGRDRSAMRYLSKVQYGNATPAADLYLWTSATPAVQWLFTLVFDYGERGVDPQVPPAFTAQNSWLARQDPFSLYNYGFEIRLHRLCRQVLMFHHFPDELGEADTLVSRLLLEYDENPILTQLCAARTLAYEGDGYRRAPVNNMMPPPPPPPMMGGNSSRPKSKWAIVEESKQIQALRYYSAQGYSVINKYLRGDDYPETQAKETLLSRDYLSTNEPSDEEFKNAMSVYINDIAEGLSSLPETDHRVVYRGLKLDKPALSDVLKEYTTIGNIIIDKAFMSTSPDKAWINDTILNIYLEKGHKGRILGDVAHFKGEAEMLFPPNTKLKIESIVNCGSQDFASQLSKLRLSDDATADTNRIKRIINMRVLNS.

A TR mART core domain is found at 373–576; it reads PMMGGNSSRP…LRLSDDATAD (204 aa). Residues Arg-471, Ser-501, and Glu-538 contribute to the active site.

This sequence belongs to the SpvB family.

The protein localises to the secreted. The enzyme catalyses L-arginyl-[protein] + NAD(+) = N(omega)-(ADP-D-ribosyl)-L-arginyl-[protein] + nicotinamide + H(+). Functionally, mono-ADP-ribosylates eukaryotic muscle and non-muscle actin on 'Arg-177'. ADP-ribosylation prevents the polymerization of G-actin to F-actin, causing actin filament depolymerization, destruction of the cytoskeleton and cytotoxicity. Does not possess NAD(+)-glycohydrolase activity, unlike most mART enzymes. The protein is Mono(ADP-ribosyl)transferase SpvB (spvB) of Salmonella typhimurium (strain 14028s / SGSC 2262).